Here is a 135-residue protein sequence, read N- to C-terminus: Interleukin-4 (135 aa).

The N-terminal stretch at 1 to 24 (MGLTYQLIPVLVCLLVCTSHFAHG) is a signal peptide. 3 disulfide bridges follow: Cys-27-Cys-135, Cys-48-Cys-85, and Cys-70-Cys-105. Asn-62 is a glycosylation site (N-linked (GlcNAc...) asparagine).

The protein belongs to the IL-4/IL-13 family.

The protein localises to the secreted. Functionally, participates in at least several B-cell activation processes as well as of other cell types. It is a costimulator of DNA-synthesis. It induces the expression of class II MHC molecules on resting B-cells. It enhances both secretion and cell surface expression of IgE and IgG1. It also regulates the expression of the low affinity Fc receptor for IgE (CD23) on both lymphocytes and monocytes. Positively regulates IL31RA expression in macrophages. Stimulates autophagy in dendritic cells by interfering with mTORC1 signaling and through the induction of RUFY4. The protein is Interleukin-4 (IL4) of Boselaphus tragocamelus (Nilgai).